A 361-amino-acid chain; its full sequence is Pyruvate dehydrogenase E1 component subunit beta, mitochondrial (361 aa).

A mitochondrion-targeting transit peptide spans 1-27; the sequence is MAVNGCMRLLRNGLTSACALEQSVRRL. Residue E90 participates in thiamine diphosphate binding. Positions 143, 191, 192, 194, and 196 each coordinate K(+).

As to quaternary structure, heterotetramer of two PDHA1 and two PDHB subunits. The heterotetramer interacts with DLAT, and is part of the multimeric pyruvate dehydrogenase complex that contains multiple copies of pyruvate dehydrogenase (E1), dihydrolipoamide acetyltransferase (DLAT, E2) and lipoamide dehydrogenase (DLD, E3). The cofactor is thiamine diphosphate.

It localises to the mitochondrion matrix. The enzyme catalyses N(6)-[(R)-lipoyl]-L-lysyl-[protein] + pyruvate + H(+) = N(6)-[(R)-S(8)-acetyldihydrolipoyl]-L-lysyl-[protein] + CO2. The pyruvate dehydrogenase complex catalyzes the overall conversion of pyruvate to acetyl-CoA and CO(2), and thereby links the glycolytic pathway to the tricarboxylic cycle. This chain is Pyruvate dehydrogenase E1 component subunit beta, mitochondrial, found in Ascaris suum (Pig roundworm).